Consider the following 881-residue polypeptide: Beta-mannosidase (881 aa).

A signal peptide spans 1 to 18 (MHLHLLFLLALCGAGCMA). N35, N77, N89, and N113 each carry an N-linked (GlcNAc...) asparagine glycan. A disulfide bridge connects residues C167 and C176. Residue 190-192 (WDW) participates in substrate binding. N-linked (GlcNAc...) asparagine glycans are attached at residues N226, N297, and N302. N456 serves as a coordination point for substrate. E457 serves as the catalytic Proton donor. Disulfide bonds link C540-C629, C732-C761, and C764-C769. E554 serves as the catalytic Nucleophile. N-linked (GlcNAc...) asparagine glycosylation is present at N803.

This sequence belongs to the glycosyl hydrolase 2 family. In terms of assembly, monomer.

The protein localises to the lysosome. It catalyses the reaction Hydrolysis of terminal, non-reducing beta-D-mannose residues in beta-D-mannosides.. It participates in glycan metabolism; N-glycan degradation. Its function is as follows. Exoglycosidase that cleaves the single beta-linked mannose residue from the non-reducing end of all N-linked glycoprotein oligosaccharides. The chain is Beta-mannosidase from Rattus norvegicus (Rat).